A 244-amino-acid polypeptide reads, in one-letter code: MAGHSKWAQIKRKKGANDKKRSAIYSKHIRAIQAAVRSGGSGDPAANLALKNAIAAAKADTVPADNIENAIKRAVGAAEGAADYKEVTYEGYGPGGTAIFIEALTDNVNRTVADIRAVFNKRGGSLGNSGSVAWQFEKKGVILLSDTSEAAQEVAIENGAEDIQESVDGLEISTAPNDLYAVQDALSAAGFKPESGQITMIPSNTVAVNGDDARKLMALVDALEDLDDVQNVYTNADLPEEVEA.

Residues 1 to 21 form a disordered region; it reads MAGHSKWAQIKRKKGANDKKR.

This sequence belongs to the TACO1 family.

It localises to the cytoplasm. The protein is Probable transcriptional regulatory protein Dgeo_2194 of Deinococcus geothermalis (strain DSM 11300 / CIP 105573 / AG-3a).